Here is a 568-residue protein sequence, read N- to C-terminus: DNA mismatch repair protein MutL (568 aa).

It belongs to the DNA mismatch repair MutL/HexB family.

This protein is involved in the repair of mismatches in DNA. It is required for dam-dependent methyl-directed DNA mismatch repair. May act as a 'molecular matchmaker', a protein that promotes the formation of a stable complex between two or more DNA-binding proteins in an ATP-dependent manner without itself being part of a final effector complex. The polypeptide is DNA mismatch repair protein MutL (Nostoc punctiforme (strain ATCC 29133 / PCC 73102)).